The sequence spans 66 residues: Protein translocase subunit SecE (66 aa).

Residues 29-49 traverse the membrane as a helical segment; the sequence is LVASTLVVVVAVFIFSLICLV.

This sequence belongs to the SecE/SEC61-gamma family. Component of the Sec protein translocase complex. Heterotrimer consisting of SecY, SecE and SecG subunits. The heterotrimers can form oligomers, although 1 heterotrimer is thought to be able to translocate proteins. Interacts with the ribosome. Interacts with SecDF, and other proteins may be involved. Interacts with SecA.

Its subcellular location is the cell inner membrane. In terms of biological role, essential subunit of the Sec protein translocation channel SecYEG. Clamps together the 2 halves of SecY. May contact the channel plug during translocation. This Rickettsia felis (strain ATCC VR-1525 / URRWXCal2) (Rickettsia azadi) protein is Protein translocase subunit SecE.